Reading from the N-terminus, the 120-residue chain is Glycine cleavage system H protein (120 aa).

Residues 17–99 form the Lipoyl-binding domain; it reads IATVGITSHA…QGAGWLYRMR (83 aa). N6-lipoyllysine is present on lysine 58.

Belongs to the GcvH family. In terms of assembly, the glycine cleavage system is composed of four proteins: P, T, L and H. (R)-lipoate serves as cofactor.

In terms of biological role, the glycine cleavage system catalyzes the degradation of glycine. The H protein shuttles the methylamine group of glycine from the P protein to the T protein. The protein is Glycine cleavage system H protein of Methylobacterium nodulans (strain LMG 21967 / CNCM I-2342 / ORS 2060).